We begin with the raw amino-acid sequence, 119 residues long: Large ribosomal subunit protein uL18 (119 aa).

This sequence belongs to the universal ribosomal protein uL18 family. As to quaternary structure, part of the 50S ribosomal subunit; part of the 5S rRNA/L5/L18/L25 subcomplex. Contacts the 5S and 23S rRNAs.

Functionally, this is one of the proteins that bind and probably mediate the attachment of the 5S RNA into the large ribosomal subunit, where it forms part of the central protuberance. This is Large ribosomal subunit protein uL18 from Borreliella afzelii (strain PKo) (Borrelia afzelii).